The primary structure comprises 147 residues: Ribosome-binding factor A (147 aa).

Positions 123–147 (LAKLKEGAQPAGDANPYKTSDEEED) are disordered.

The protein belongs to the RbfA family. In terms of assembly, monomer. Binds 30S ribosomal subunits, but not 50S ribosomal subunits or 70S ribosomes.

Its subcellular location is the cytoplasm. Its function is as follows. One of several proteins that assist in the late maturation steps of the functional core of the 30S ribosomal subunit. Associates with free 30S ribosomal subunits (but not with 30S subunits that are part of 70S ribosomes or polysomes). Required for efficient processing of 16S rRNA. May interact with the 5'-terminal helix region of 16S rRNA. This is Ribosome-binding factor A from Corynebacterium aurimucosum (strain ATCC 700975 / DSM 44827 / CIP 107346 / CN-1) (Corynebacterium nigricans).